A 676-amino-acid chain; its full sequence is RNA helicase NPH-II (676 aa).

Positions 172-347 (FSAWISHRPV…VFLPNPAFIH (176 aa)) constitute a Helicase ATP-binding domain. An ATP-binding site is contributed by 185–192 (GGTGVGKT). The DEXH box signature appears at 296–299 (DEVH). Residues 366-535 (NPSSRMAYIE…NYILYANKFN (170 aa)) form the Helicase C-terminal domain.

This sequence belongs to the DEAD box helicase family. DEAH subfamily. Monomer.

It localises to the virion. The catalysed reaction is ATP + H2O = ADP + phosphate + H(+). In terms of biological role, NTP-dependent helicase that catalyzes unidirectional unwinding of 3'tailed duplex RNAs and plays an important role during transcription of early mRNAs, presumably by preventing R-loop formation behind the elongating RNA polymerase. Might also play a role in the export of newly synthesized mRNA chains out of the core into the cytoplasm. Required for replication and propagation of viral particles. This Vaccinia virus (strain Ankara) (VACV) protein is RNA helicase NPH-II (OPG084).